A 506-amino-acid polypeptide reads, in one-letter code: Exopolysaccharide phosphotransferase NFA_48680 (506 aa).

The tract at residues 484–506 (PAPWERVSAPSRRPLPESTAGAA) is disordered.

Belongs to the stealth family.

The chain is Exopolysaccharide phosphotransferase NFA_48680 from Nocardia farcinica (strain IFM 10152).